The sequence spans 595 residues: Inactive serine/threonine-protein kinase PLK5 (595 aa).

The region spanning 27 to 279 is the Protein kinase domain; sequence YRRGKLIGKG…LDHLLQDDFF (253 aa). Residues 33–41 and K56 contribute to the ATP site; that span reads IGKGAFSRC. D150 (proton acceptor) is an active-site residue. The disordered stretch occupies residues 326–350; the sequence is FTSKEASGPGEEGTEPDHMEAGNEE. The segment covering 340-350 has biased composition (basic and acidic residues); sequence EPDHMEAGNEE. 2 POLO box domains span residues 413–491 and 509–595; these read WAPK…YMQR and DISL…LQSV.

Belongs to the protein kinase superfamily. Ser/Thr protein kinase family. CDC5/Polo subfamily. As to expression, expressed in the cerebellum, eye and brain cortex (at protein level). Expressed in highly differentiated tissues, such as brain, eyes and ovary. Not detectable in proliferating tissues, such as the colon, spleen and placenta.

The protein localises to the nucleus. The protein resides in the nucleolus. Its subcellular location is the cytoplasm. Functionally, inactive serine/threonine-protein kinase that plays a role in cell cycle progression and neuronal differentiation. This Mus musculus (Mouse) protein is Inactive serine/threonine-protein kinase PLK5.